The chain runs to 257 residues: NAD kinase (257 aa).

The active-site Proton acceptor is the aspartate 46. Residues 46–47 (DG), 116–117 (NE), aspartate 146, alanine 154, and 157–162 (TAYNLS) each bind NAD(+).

Belongs to the NAD kinase family. The cofactor is a divalent metal cation.

It is found in the cytoplasm. It catalyses the reaction NAD(+) + ATP = ADP + NADP(+) + H(+). Involved in the regulation of the intracellular balance of NAD and NADP, and is a key enzyme in the biosynthesis of NADP. Catalyzes specifically the phosphorylation on 2'-hydroxyl of the adenosine moiety of NAD to yield NADP. The sequence is that of NAD kinase from Mesorhizobium japonicum (strain LMG 29417 / CECT 9101 / MAFF 303099) (Mesorhizobium loti (strain MAFF 303099)).